Consider the following 465-residue polypeptide: Neuraminidase (465 aa).

At 1–11 the chain is on the intravirion side; it reads MLPSTIQTLTL. A helical transmembrane segment spans residues 12 to 34; sequence FLTSGGVLLSLYVSASLSYLLYS. The segment at 13–35 is involved in apical transport and lipid raft association; the sequence is LTSGGVLLSLYVSASLSYLLYSD. Residues 35-465 lie on the Virion surface side of the membrane; that stretch reads DILLRFSSKI…DTVTGVDMAL (431 aa). Positions 38–85 are hypervariable stalk region; it reads LRFSSKITAPTMTLDCANASNVQAVNRSATKEMTFLLPEPEWTYPRLS. N-linked (GlcNAc...) asparagine; by host glycans are attached at residues asparagine 55 and asparagine 63. Intrachain disulfides connect cysteine 86/cysteine 419, cysteine 121/cysteine 126, cysteine 181/cysteine 228, cysteine 230/cysteine 235, cysteine 276/cysteine 290, cysteine 278/cysteine 288, cysteine 317/cysteine 336, and cysteine 423/cysteine 446. Positions 88–465 are head of neuraminidase; sequence GSTFQKALLI…DTVTGVDMAL (378 aa). Residue arginine 115 coordinates substrate. Residue asparagine 143 is glycosylated (N-linked (GlcNAc...) asparagine; by host). Aspartate 148 acts as the Proton donor/acceptor in catalysis. Arginine 149 serves as a coordination point for substrate. 274 to 275 is a binding site for substrate; that stretch reads EE. N-linked (GlcNAc...) asparagine; by host glycosylation is present at asparagine 283. A substrate-binding site is contributed by arginine 291. Residues aspartate 292 and aspartate 323 each contribute to the Ca(2+) site. Residues 328–347 form a disordered region; it reads DDGSITGPCESDGDKGRGGI. Arginine 373 serves as a coordination point for substrate. Tyrosine 408 serves as the catalytic Nucleophile.

This sequence belongs to the glycosyl hydrolase 34 family. As to quaternary structure, homotetramer. Ca(2+) serves as cofactor. In terms of processing, N-glycosylated.

The protein localises to the virion membrane. It localises to the host apical cell membrane. It catalyses the reaction Hydrolysis of alpha-(2-&gt;3)-, alpha-(2-&gt;6)-, alpha-(2-&gt;8)- glycosidic linkages of terminal sialic acid residues in oligosaccharides, glycoproteins, glycolipids, colominic acid and synthetic substrates.. Its activity is regulated as follows. Inhibited by the neuraminidase inhibitors zanamivir (Relenza) and oseltamivir (Tamiflu). These drugs interfere with the release of progeny virus from infected cells and are effective against all influenza strains. Resistance to neuraminidase inhibitors is quite rare. In terms of biological role, catalyzes the removal of terminal sialic acid residues from viral and cellular glycoconjugates. Cleaves off the terminal sialic acids on the glycosylated HA during virus budding to facilitate virus release. Additionally helps virus spread through the circulation by further removing sialic acids from the cell surface. These cleavages prevent self-aggregation and ensure the efficient spread of the progeny virus from cell to cell. Otherwise, infection would be limited to one round of replication. Described as a receptor-destroying enzyme because it cleaves a terminal sialic acid from the cellular receptors. May facilitate viral invasion of the upper airways by cleaving the sialic acid moieties on the mucin of the airway epithelial cells. Likely to plays a role in the budding process through its association with lipid rafts during intracellular transport. May additionally display a raft-association independent effect on budding. Plays a role in the determination of host range restriction on replication and virulence. Sialidase activity in late endosome/lysosome traffic seems to enhance virus replication. The chain is Neuraminidase from Influenza B virus (strain B/Memphis/3/1989).